The following is a 242-amino-acid chain: MMMDLFETGSYFFYLDGENVTLQPLEVAEGSPLYPGSDGTLSPCQDQMPQEAGSDSSGEEHVLAPPGLQPPHCPGQCLIWACKTCKRKSAPTDRRKAATLRERRRLKKINEAFEALKRRTVANPNQRLPKVEILRSAISYIERLQDLLHRLDQQEKMQELGVDPYSYKPKQEILEGADFLRTCSPQWPSVSDHSRGLVITAKEGGANVDASASSSLQRLSSIVDSISSEERKLPSVEEVVEK.

The segment at 31-63 is disordered; the sequence is SPLYPGSDGTLSPCQDQMPQEAGSDSSGEEHVL. A compositionally biased stretch (polar residues) spans 39–56; the sequence is GTLSPCQDQMPQEAGSDS. Positions 93-144 constitute a bHLH domain; it reads DRRKAATLRERRRLKKINEAFEALKRRTVANPNQRLPKVEILRSAISYIERL.

Efficient DNA binding requires dimerization with another bHLH protein. Interacts with CSRP3. Skeletal muscle.

It is found in the nucleus. Involved in muscle differentiation (myogenic factor). Induces fibroblasts to differentiate into myoblasts. Probable sequence specific DNA-binding protein. The protein is Myogenic factor 6 (Myf6) of Mus musculus (Mouse).